The primary structure comprises 498 residues: Probable deoxyguanosinetriphosphate triphosphohydrolase (498 aa).

The HD domain occupies 71–262 (RLTHSLEVQQ…MEAADDISYC (192 aa)).

Belongs to the dGTPase family. Type 1 subfamily. Mg(2+) is required as a cofactor.

It catalyses the reaction dGTP + H2O = 2'-deoxyguanosine + triphosphate + H(+). Its function is as follows. dGTPase preferentially hydrolyzes dGTP over the other canonical NTPs. In Pseudomonas aeruginosa (strain ATCC 15692 / DSM 22644 / CIP 104116 / JCM 14847 / LMG 12228 / 1C / PRS 101 / PAO1), this protein is Probable deoxyguanosinetriphosphate triphosphohydrolase.